We begin with the raw amino-acid sequence, 77 residues long: NADH dehydrogenase [ubiquinone] 1 alpha subcomplex subunit 3 (77 aa).

The chain crosses the membrane as a helical span at residues 23–45 (IVGGSALALAGIVMATIGVANYY).

This sequence belongs to the complex I NDUFA3 subunit family. In terms of assembly, complex I is composed of 43 different subunits.

Its subcellular location is the mitochondrion inner membrane. It localises to the cytoplasm. The protein resides in the myofibril. The protein localises to the sarcomere. It is found in the z line. Its function is as follows. Accessory subunit of the mitochondrial membrane respiratory chain NADH dehydrogenase (Complex I), that is believed not to be involved in catalysis. Complex I functions in the transfer of electrons from NADH to the respiratory chain. The immediate electron acceptor for the enzyme is believed to be ubiquinone. Required for the maintenance of muscle integrity and for cell proliferation in the wing imaginal disc epithelium, possibly by interacting with the chaperone-assisted selective autophagy (CASA) pathway. This Drosophila melanogaster (Fruit fly) protein is NADH dehydrogenase [ubiquinone] 1 alpha subcomplex subunit 3.